We begin with the raw amino-acid sequence, 951 residues long: Pheromone-regulated membrane protein 10 (951 aa).

Polar residues-rich tracts occupy residues 1–10 (MSSSYGNNGD), 68–84 (GGSTDELNRANRTNVGS), and 92–104 (RTASNTESGNRRQ). 3 disordered regions span residues 1-293 (MSSS…EDPI), 313-366 (AGKS…TMVS), and 433-487 (NDSS…LPNF). Positions 126-135 (DDDDEEEEEH) are enriched in acidic residues. A compositionally biased stretch (basic and acidic residues) spans 219–234 (PHQETNDGRNSAESHS). Composition is skewed to polar residues over residues 318-332 (PGTQHGASGSASSEH), 354-366 (PFNQSTDGETMVS), and 468-484 (SQTNVSGANKSGSSMNL). The next 10 membrane-spanning stretches (helical) occupy residues 635–655 (WVSVLLYAFCSSMVTPFAFGG), 657–677 (WINMAVAFGIGLCVGSLQFIV), 687–707 (VFEVTASIVVSFCGRALGSIP), 711–731 (ICFGATVQGSLALILPGYIIL), 753–773 (IIYSLFLGFGITLGAALFGWI), 786–806 (NISPWFRFIFVPCFSIGLGLI), 811–831 (WTQLPVMTLISCCGYVVTYFS), 841–861 (FTSAMAAFVIGILGNLYSRIW), 863–883 (GFAVSAMLPAIFVQVPSGVAS), and 918–938 (VTMIQVSIGISVGLFASTLFI).

The protein belongs to the ThrE exporter (TC 2.A.79) family.

Its subcellular location is the membrane. The protein is Pheromone-regulated membrane protein 10 of Kluyveromyces lactis (strain ATCC 8585 / CBS 2359 / DSM 70799 / NBRC 1267 / NRRL Y-1140 / WM37) (Yeast).